Consider the following 548-residue polypeptide: Beta-caryophyllene synthase (548 aa).

Residues R268, D305, D309, R446, and D449 each contribute to the (2E,6E)-farnesyl diphosphate site. Residues D305 and D309 each coordinate Mg(2+). Residues 305-309 (DDIYD) carry the DDXXD motif motif. Mg(2+) is bound by residues D449 and E457.

Belongs to the terpene synthase family. Mg(2+) is required as a cofactor.

It catalyses the reaction (2E,6E)-farnesyl diphosphate = (-)-(E)-beta-caryophyllene + diphosphate. Its pathway is secondary metabolite biosynthesis; terpenoid biosynthesis. Its function is as follows. Sesquiterpene synthase that catalyzes the formation of sesquiterpenes and sesquiterpenoid alcohols. Converts farnesyl diphosphate (FPP) to beta-caryophyllene. Can use geranyl diphosphate (GPP) to produce myrcene, limonene and camphene. The chain is Beta-caryophyllene synthase from Lavandula angustifolia (Lavender).